The chain runs to 444 residues: Exodeoxyribonuclease 7 large subunit (444 aa).

This sequence belongs to the XseA family. Heterooligomer composed of large and small subunits.

It is found in the cytoplasm. The enzyme catalyses Exonucleolytic cleavage in either 5'- to 3'- or 3'- to 5'-direction to yield nucleoside 5'-phosphates.. Functionally, bidirectionally degrades single-stranded DNA into large acid-insoluble oligonucleotides, which are then degraded further into small acid-soluble oligonucleotides. The sequence is that of Exodeoxyribonuclease 7 large subunit from Xylella fastidiosa (strain 9a5c).